The following is a 196-amino-acid chain: Orotate phosphoribosyltransferase (196 aa).

117-125 contacts 5-phospho-alpha-D-ribose 1-diphosphate; that stretch reads EDVVTTGLS. Threonine 121 and arginine 149 together coordinate orotate.

It belongs to the purine/pyrimidine phosphoribosyltransferase family. PyrE subfamily. As to quaternary structure, homodimer. Mg(2+) serves as cofactor.

The enzyme catalyses orotidine 5'-phosphate + diphosphate = orotate + 5-phospho-alpha-D-ribose 1-diphosphate. The protein operates within pyrimidine metabolism; UMP biosynthesis via de novo pathway; UMP from orotate: step 1/2. Its function is as follows. Catalyzes the transfer of a ribosyl phosphate group from 5-phosphoribose 1-diphosphate to orotate, leading to the formation of orotidine monophosphate (OMP). The protein is Orotate phosphoribosyltransferase of Rhizorhabdus wittichii (strain DSM 6014 / CCUG 31198 / JCM 15750 / NBRC 105917 / EY 4224 / RW1) (Sphingomonas wittichii).